The chain runs to 475 residues: Ribulose bisphosphate carboxylase large chain (475 aa).

Residues Met1 to Ser2 constitute a propeptide that is removed on maturation. Residue Pro3 is modified to N-acetylproline. Lys14 is subject to N6,N6,N6-trimethyllysine. Residues Asn123 and Thr173 each coordinate substrate. Lys175 serves as the catalytic Proton acceptor. Lys177 is a binding site for substrate. Mg(2+)-binding residues include Lys201, Asp203, and Glu204. Position 201 is an N6-carboxylysine (Lys201). His294 serves as the catalytic Proton acceptor. 3 residues coordinate substrate: Arg295, His327, and Ser379.

Belongs to the RuBisCO large chain family. Type I subfamily. As to quaternary structure, heterohexadecamer of 8 large chains and 8 small chains; disulfide-linked. The disulfide link is formed within the large subunit homodimers. Requires Mg(2+) as cofactor. Post-translationally, the disulfide bond which can form in the large chain dimeric partners within the hexadecamer appears to be associated with oxidative stress and protein turnover.

It localises to the plastid. The protein resides in the chloroplast. The enzyme catalyses 2 (2R)-3-phosphoglycerate + 2 H(+) = D-ribulose 1,5-bisphosphate + CO2 + H2O. The catalysed reaction is D-ribulose 1,5-bisphosphate + O2 = 2-phosphoglycolate + (2R)-3-phosphoglycerate + 2 H(+). Its function is as follows. RuBisCO catalyzes two reactions: the carboxylation of D-ribulose 1,5-bisphosphate, the primary event in carbon dioxide fixation, as well as the oxidative fragmentation of the pentose substrate in the photorespiration process. Both reactions occur simultaneously and in competition at the same active site. This is Ribulose bisphosphate carboxylase large chain from Ostrya virginiana (American hophornbeam).